A 376-amino-acid polypeptide reads, in one-letter code: Alanine racemase (376 aa).

The active-site Proton acceptor; specific for D-alanine is K36. N6-(pyridoxal phosphate)lysine is present on K36. R134 lines the substrate pocket. The active-site Proton acceptor; specific for L-alanine is Y266. Substrate is bound at residue M314.

It belongs to the alanine racemase family. It depends on pyridoxal 5'-phosphate as a cofactor.

It catalyses the reaction L-alanine = D-alanine. It functions in the pathway amino-acid biosynthesis; D-alanine biosynthesis; D-alanine from L-alanine: step 1/1. Its function is as follows. Catalyzes the interconversion of L-alanine and D-alanine. May also act on other amino acids. The protein is Alanine racemase (alr) of Nitratidesulfovibrio vulgaris (strain ATCC 29579 / DSM 644 / CCUG 34227 / NCIMB 8303 / VKM B-1760 / Hildenborough) (Desulfovibrio vulgaris).